Reading from the N-terminus, the 545-residue chain is Glucose-6-phosphate isomerase (545 aa).

Glu351 serves as the catalytic Proton donor. Active-site residues include His382 and Lys510.

The protein belongs to the GPI family.

The protein resides in the cytoplasm. The enzyme catalyses alpha-D-glucose 6-phosphate = beta-D-fructose 6-phosphate. The protein operates within carbohydrate biosynthesis; gluconeogenesis. Its pathway is carbohydrate degradation; glycolysis; D-glyceraldehyde 3-phosphate and glycerone phosphate from D-glucose: step 2/4. Functionally, catalyzes the reversible isomerization of glucose-6-phosphate to fructose-6-phosphate. This Helicobacter pylori (strain G27) protein is Glucose-6-phosphate isomerase.